We begin with the raw amino-acid sequence, 84 residues long: Exodeoxyribonuclease 7 small subunit (84 aa).

Belongs to the XseB family. In terms of assembly, heterooligomer composed of large and small subunits.

The protein resides in the cytoplasm. It carries out the reaction Exonucleolytic cleavage in either 5'- to 3'- or 3'- to 5'-direction to yield nucleoside 5'-phosphates.. Its function is as follows. Bidirectionally degrades single-stranded DNA into large acid-insoluble oligonucleotides, which are then degraded further into small acid-soluble oligonucleotides. The sequence is that of Exodeoxyribonuclease 7 small subunit from Haemophilus influenzae (strain 86-028NP).